The primary structure comprises 183 residues: Tumor necrosis factor ligand superfamily member 4 (183 aa).

At 1–23 the chain is on the cytoplasmic side; the sequence is MERVQPLEENVGNAARPRFERNK. The helical; Signal-anchor for type II membrane protein transmembrane segment at 24–50 threads the bilayer; the sequence is LLLVASVIQGLGLLLCFTYICLHFSAL. Positions 51 to 173 constitute a THD domain; it reads QVSHRYPRIQ…HVNGGELILI (123 aa). The Extracellular segment spans residues 51–183; sequence QVSHRYPRIQ…HQNPGEFCVL (133 aa). N-linked (GlcNAc...) asparagine glycosylation is found at N90, N114, N152, and N157. The cysteines at positions 97 and 181 are disulfide-linked.

It belongs to the tumor necrosis factor family. As to quaternary structure, homotrimer.

The protein resides in the membrane. In terms of biological role, cytokine that binds to TNFRSF4. Co-stimulates T-cell proliferation and cytokine production. In Homo sapiens (Human), this protein is Tumor necrosis factor ligand superfamily member 4 (TNFSF4).